A 486-amino-acid polypeptide reads, in one-letter code: Monocarboxylate transporter 12 (486 aa).

Residues 1–9 (MTKITRVGS) lie on the Cytoplasmic side of the membrane. The next 6 helical transmembrane spans lie at 10 to 30 (ASPP…LVTI), 58 to 78 (AWIH…GSVV), 86 to 106 (AGIM…SFAT), 115 to 135 (LGVL…AMVG), 148 to 168 (IAMS…QLLI), and 177 to 197 (LLIL…MRPI). Basic and acidic residues predominate over residues 201-220 (EDPSGPEKSHDRDAQREDCK). The disordered stretch occupies residues 201-221 (EDPSGPEKSHDRDAQREDCKQ). 6 helical membrane-spanning segments follow: residues 253 to 273 (FVVL…LFVY), 289 to 309 (AFLM…FGWL), 320 to 340 (YVCY…LPML), 353 to 373 (FGYF…EIVG), 383 to 403 (VVYF…GWLV), and 410 to 430 (TAAF…LGFA). Topologically, residues 431–486 (KIAKRMKRTQVPFLVKDSDPKLHLWTNGSVAYSIAKELDQKDEESLAKARTGCNLT) are cytoplasmic.

The protein belongs to the major facilitator superfamily. Monocarboxylate porter (TC 2.A.1.13) family. As to quaternary structure, interacts with isoform 2 of BSG; this interaction is required for its localization to the plasma membrane. Detected in kidney, choroid plexus, testis, lung, stomach, large and small intestine, spleen, fat and parotid gland. In eye, expressed in cornea, ciliary epithelium, lens epithelium and lens fiber.

Its subcellular location is the cell membrane. It localises to the basolateral cell membrane. The enzyme catalyses creatine(in) = creatine(out). It catalyses the reaction guanidinoacetate(in) = guanidinoacetate(out). Its activity is regulated as follows. Creatine uptake is inhibited by carbonyl cyanide 3-chlorophenylhydrazone (CCCP) and by valinomycin. Functions as a transporter for creatine and as well for its precursor guanidinoacetate. Transport of creatine and GAA is independent of resting membrane potential and extracellular Na(+), Cl(-), or pH. Contributes to the process of creatine biosynthesis and distribution. This Rattus norvegicus (Rat) protein is Monocarboxylate transporter 12.